The chain runs to 229 residues: Lipoprotein-releasing system ATP-binding protein LolD (229 aa).

In terms of domain architecture, ABC transporter spans 7–229 (LQCINLTKSF…KNGQLFNNKN (223 aa)). Residue 43–50 (GKSGSGKS) participates in ATP binding.

It belongs to the ABC transporter superfamily. Lipoprotein translocase (TC 3.A.1.125) family. As to quaternary structure, the complex is composed of two ATP-binding proteins (LolD) and two transmembrane proteins (LolC and LolE).

The protein localises to the cell inner membrane. Its function is as follows. Part of the ABC transporter complex LolCDE involved in the translocation of mature outer membrane-directed lipoproteins, from the inner membrane to the periplasmic chaperone, LolA. Responsible for the formation of the LolA-lipoprotein complex in an ATP-dependent manner. This Buchnera aphidicola subsp. Schizaphis graminum (strain Sg) protein is Lipoprotein-releasing system ATP-binding protein LolD.